The primary structure comprises 134 residues: Small ribosomal subunit protein uS8c (134 aa).

It belongs to the universal ribosomal protein uS8 family. In terms of assembly, part of the 30S ribosomal subunit.

It localises to the plastid. It is found in the chloroplast. One of the primary rRNA binding proteins, it binds directly to 16S rRNA central domain where it helps coordinate assembly of the platform of the 30S subunit. This is Small ribosomal subunit protein uS8c (rps8) from Gossypium hirsutum (Upland cotton).